The sequence spans 271 residues: MSIVVGQAYQHLPKQVSQNPDVGGWSFLQYFSEPKGIVQNREDDTKKTAYVYPIEKRSVAKLSLEMCTESLGTENGSDSGDEMSLLALEATNISKSPRLTTKPQKETSFMTRENSFPPPLNSVNGFNNSRMVKSYKEDGRLVVQAIRVCSPPRCFVSERREGRLRLCLSQNSLNSQDAEEEFEEEDEDDQYDAEEEEEEEEEEEEEEEEEEEEEEEEEEEDEEGIVGNNENFEGKSGNKKVSNRPKRRCNENGCEPKTMLNWKQQQFWVTT.

The FAF domain maps to 114–168 (NSFPPPLNSVNGFNNSRMVKSYKEDGRLVVQAIRVCSPPRCFVSERREGRLRLCL). A disordered region spans residues 174–255 (NSQDAEEEFE…KRRCNENGCE (82 aa)). Over residues 177-224 (DAEEEFEEEDEDDQYDAEEEEEEEEEEEEEEEEEEEEEEEEEEEDEEG) the composition is skewed to acidic residues. A compositionally biased stretch (basic residues) spans 237 to 247 (GNKKVSNRPKR).

It belongs to the fantastic four family. In terms of tissue distribution, expressed in the shoot apex, stamens, anthers and young siliques. Detected in provascular and vascular tissue.

Able to repress WUS when constitutively overexpressed, but have no effect on CLV3. The protein is Protein FANTASTIC FOUR 1 (FAF1) of Arabidopsis thaliana (Mouse-ear cress).